A 120-amino-acid polypeptide reads, in one-letter code: Large ribosomal subunit protein uL18 (120 aa).

Basic and acidic residues predominate over residues 1–10 (MKLNRVESTR). A disordered region spans residues 1 to 26 (MKLNRVESTRSRHRRVRRKVGGTGDR). Residues 11-20 (SRHRRVRRKV) are compositionally biased toward basic residues.

Belongs to the universal ribosomal protein uL18 family. As to quaternary structure, part of the 50S ribosomal subunit; part of the 5S rRNA/L5/L18/L25 subcomplex. Contacts the 5S and 23S rRNAs.

Its function is as follows. This is one of the proteins that bind and probably mediate the attachment of the 5S RNA into the large ribosomal subunit, where it forms part of the central protuberance. This is Large ribosomal subunit protein uL18 from Cyanothece sp. (strain PCC 7425 / ATCC 29141).